A 341-amino-acid chain; its full sequence is MFVDKTLMITGGTGSFGNAVLSRFLKSGIINDIKEIRIFSRDEKKQEDMRIALNNPKLKFYIGDVRNYKSIDEAMHGVDYVFHAAALKQVPTCEFYPMEAINTNVLGAENVLSAAINNKVTKVIVLSTDKAVYPINAMGLSKALMEKLAIAKARMRSPGETVLCVTRYGNVMASRGSVIPLFINQIKQGKVLTITEPSMTRFLMSLVDSVDLVLYAFEHGHQGDIFVQKSPASTIEVLAKALQDIFDSKNEIRFIGTRHGEKHYESLVSSEEMAKADDLRDYYRIPMDGRDLNYAKYFVEGEKKVALLEDYTSHNTKRLNLEEVKELLLTLDYVQEELKNA.

It belongs to the polysaccharide synthase family.

It catalyses the reaction UDP-alpha-D-glucose = UDP-alpha-D-galactose. Its function is as follows. Epimerizes UDP-galactose to UDP-glucose. In Rickettsia conorii (strain ATCC VR-613 / Malish 7), this protein is UDP-glucose 4-epimerase (capD).